A 548-amino-acid chain; its full sequence is MKKRWNSVFKLVLMVTAILGLSLYVTTSQGVEVRAESITQPTAINVIFPDPALANAIKIAAGKSNVTDTVTQADLDGITTLSAFGTGVTTIEGVQYLNNLIGLELKDNQITDLTPLKNLTKITELELSGNPLKNVSAIAGLQSIKTLDLTSTQITDVTPLAGLSNLQVLYLDLNQITNISPLAGLTNLQYLSIGNAQVSDLTPLANLSKLTTLKADDNKISDISPLASLPNLIEVHLKNNQISDVSPLANTSNLFIVTLTNQTITNQPVFYQNNLVVPNVVKGPSGAPIAPATISDNGTYASPNLTWNLTSFINNVSYTFNQSVTFKNTTVPFSGTVTQPLTEAYTAVFDVDGKQTSVTVGANELIKEPTAPTKEGYTFTGWYDAKTGGTKWDFATDKMPAEDITLYAQFTINSYTATFDIDGKLTTQKVTYQSLLEEPVAPTKDGYTFTGWYDAKTGGTKWDFATGKMPAGNITLYAQFTKNDNPNPDDPTTNTPTGNGDGTSNPSNSGGNTTLPTAGDENTMLPIFIGVFLLGTATLILRKTIKVK.

An N-terminal signal peptide occupies residues 1-30 (MKKRWNSVFKLVLMVTAILGLSLYVTTSQG). LRR repeat units lie at residues 93–105 (GVQY…GLEL), 113–127 (LTPL…ELEL), 135–149 (VSAI…TLDL), 157–171 (VTPL…VLYL), 179–193 (ISPL…YLSI), 201–215 (LTPL…TLKA), and 223–236 (ISPL…IEVH). The tract at residues 480-518 (FTKNDNPNPDDPTTNTPTGNGDGTSNPSNSGGNTTLPTA) is disordered. Positions 483 to 498 (NDNPNPDDPTTNTPTG) are enriched in low complexity. Residues 504 to 516 (SNPSNSGGNTTLP) are compositionally biased toward polar residues. An LPXTG sorting signal motif is present at residues 515–519 (LPTAG). Alanine 518 carries the pentaglycyl murein peptidoglycan amidated alanine modification. Positions 519 to 548 (GDENTMLPIFIGVFLLGTATLILRKTIKVK) are cleaved as a propeptide — removed by sortase A.

Belongs to the internalin family.

Its subcellular location is the secreted. It is found in the cell wall. Functionally, contributes to systemic listeriosis in mice by decreasing host IL-6 cytokine production and thus evasion of the host immune response. Does not contribute to invasion of the host intestinal tissue. In Listeria monocytogenes serovar 1/2a (strain ATCC BAA-679 / EGD-e), this protein is Internalin H (inlH).